A 139-amino-acid chain; its full sequence is Histone H2B.11 (139 aa).

Over residues 1-39 (MAPKAEKKPAEKKPVEEKAEKKPKAEKRVPGAKEGGGEK) the composition is skewed to basic and acidic residues. Residues 1 to 47 (MAPKAEKKPAEKKPVEEKAEKKPKAEKRVPGAKEGGGEKKGKKKAKK) form a disordered region. 2 positions are modified to N6-acetyllysine: Lys-7 and Lys-27. Lys-135 is covalently cross-linked (Glycyl lysine isopeptide (Lys-Gly) (interchain with G-Cter in ubiquitin)).

This sequence belongs to the histone H2B family. As to quaternary structure, the nucleosome is a histone octamer containing two molecules each of H2A, H2B, H3 and H4 assembled in one H3-H4 heterotetramer and two H2A-H2B heterodimers. The octamer wraps approximately 147 bp of DNA. In terms of processing, can be acetylated to form H2BK6ac and H2BK33ac. Post-translationally, monoubiquitinated by BRE1 to form H2BK143ub1 and deubiquitinated by UBP26. Required for heterochromatic histone H3 di- and trimethylation at H3K4me. May give a specific tag for epigenetic transcriptional activation.

It localises to the nucleus. Its subcellular location is the chromosome. Its function is as follows. Core component of nucleosome. Nucleosomes wrap and compact DNA into chromatin, limiting DNA accessibility to the cellular machineries which require DNA as a template. Histones thereby play a central role in transcription regulation, DNA repair, DNA replication and chromosomal stability. DNA accessibility is regulated via a complex set of post-translational modifications of histones, also called histone code, and nucleosome remodeling. The chain is Histone H2B.11 (H2B.11) from Oryza sativa subsp. indica (Rice).